The following is a 1414-amino-acid chain: Calcium-transporting ATPase 2 (1414 aa).

Disordered stretches follow at residues 1 to 231 (MSRN…PSRL) and 265 to 294 (AVGT…QWRA). Topologically, residues 1–327 (MSRNNPPPVI…LLMWLAFKDK (327 aa)) are cytoplasmic. Composition is skewed to low complexity over residues 33 to 53 (PTPT…PESP) and 75 to 96 (SPTP…SSSS). Basic and acidic residues predominate over residues 179 to 189 (DGDRGEDDANK). Over residues 190–201 (KGKKDKKGKKGK) the composition is skewed to basic residues. Over residues 202–229 (KDKEEPPSAHLDPDKDKTDPTPFREKPS) the composition is skewed to basic and acidic residues. Residues 328–348 (VLILLSVAAVVSLALGLYQDL) traverse the membrane as a helical segment. Residues 349-370 (GTPPKIIYNDECPDGCEEAQVD) are Vacuolar-facing. A helical membrane pass occupies residues 371 to 391 (WVEGVAIVVAIIIVVLVGSIN). At 392-541 (DWQKERQFKK…TPLQIKLNHL (150 aa)) the chain is on the cytoplasmic side. The helical transmembrane segment at 542-562 (AELIAKLGGASGLLLFIALMI) threads the bilayer. Topologically, residues 563 to 585 (RFFVQLKTNPDRSANDKAQSFIQ) are vacuolar. The chain crosses the membrane as a helical span at residues 586 to 606 (ILIIAVTLVVVAVPEGLPLAV). Residues V595 and E600 each contribute to the Ca(2+) site. Residues 607-1040 (TLALAFATKR…GRCVNDSVKK (434 aa)) lie on the Cytoplasmic side of the membrane. D642 functions as the 4-aspartylphosphate intermediate in the catalytic mechanism. Mg(2+) contacts are provided by D642 and T644. ATP contacts are provided by residues T644, E737, R779, 909 to 911 (TGD), R958, and K964. D983 lines the Mg(2+) pocket. N986 provides a ligand contact to ATP. The helical transmembrane segment at 1041–1061 (FLQFQISVNITAVFITFISAV) threads the bilayer. Position 1049 (N1049) interacts with Ca(2+). Residues 1062 to 1068 (ASSSEES) are Vacuolar-facing. Residues 1069–1089 (VLTAVQLLWVNLIMDTFAALA) traverse the membrane as a helical segment. The Ca(2+) site is built by N1079 and D1083. At 1090–1118 (LATDPATESSLDRKPDRKNAPLITVEMFK) the chain is on the cytoplasmic side. Residues 1119-1139 (MIMVQAIYQIIVCLVLHFAGL) traverse the membrane as a helical segment. Residues 1140 to 1153 (KILGLEDNDQNNTE) are Vacuolar-facing. A helical membrane pass occupies residues 1154–1171 (LGALVFNCFVFCQIFNQL). The Cytoplasmic portion of the chain corresponds to 1172–1191 (NCRRLDRKLNVLEGFWRNWY). The helical transmembrane segment at 1192–1212 (FIIIFLIMVGGQILIVEVGGA) threads the bilayer. Residue E1208 coordinates Ca(2+). The Vacuolar segment spans residues 1213 to 1223 (AFQVTRLGGRD). The chain crosses the membrane as a helical span at residues 1224 to 1244 (WGITLVIGALSLPIGALVRLT). Residues 1245–1414 (PTGPFARLLV…GLSSGDANNV (170 aa)) lie on the Cytoplasmic side of the membrane. Positions 1376 to 1414 (PRTNPDDPLYAKFGLQPPESRGSSVSGAEGLSSGDANNV) are disordered.

It belongs to the cation transport ATPase (P-type) (TC 3.A.3) family.

It is found in the vacuole membrane. It catalyses the reaction Ca(2+)(in) + ATP + H2O = Ca(2+)(out) + ADP + phosphate + H(+). In terms of biological role, this magnesium-dependent enzyme catalyzes the hydrolysis of ATP coupled with the transport of calcium. Transports calcium to the vacuole and participates in the control of cytosolic free calcium. The chain is Calcium-transporting ATPase 2 from Cryptococcus neoformans var. grubii serotype A (strain H99 / ATCC 208821 / CBS 10515 / FGSC 9487) (Filobasidiella neoformans var. grubii).